The chain runs to 101 residues: UPF0235 protein MMP1055 (101 aa).

Belongs to the UPF0235 family.

This Methanococcus maripaludis (strain DSM 14266 / JCM 13030 / NBRC 101832 / S2 / LL) protein is UPF0235 protein MMP1055.